A 334-amino-acid polypeptide reads, in one-letter code: Fructose-1,6-bisphosphatase class 1 2 (334 aa).

Residues glutamate 92, aspartate 114, leucine 116, and aspartate 117 each contribute to the Mg(2+) site. Substrate is bound by residues 117-120 (DGSS), asparagine 208, and lysine 274. Residue glutamate 280 participates in Mg(2+) binding.

It belongs to the FBPase class 1 family. As to quaternary structure, homotetramer. It depends on Mg(2+) as a cofactor.

The protein localises to the cytoplasm. The catalysed reaction is beta-D-fructose 1,6-bisphosphate + H2O = beta-D-fructose 6-phosphate + phosphate. Its pathway is carbohydrate biosynthesis; gluconeogenesis. The protein is Fructose-1,6-bisphosphatase class 1 2 of Albidiferax ferrireducens (strain ATCC BAA-621 / DSM 15236 / T118) (Rhodoferax ferrireducens).